Consider the following 237-residue polypeptide: Undecaprenyl-diphosphatase (237 aa).

The next 7 helical transmembrane spans lie at 38–58 (QTAV…FDGI), 65–85 (WRII…GVLF), 92–112 (LFSS…ILMF), 126–146 (MSFL…FPGI), 166–186 (ALQY…ILGL), 191–211 (VTIL…YVLS), and 217–237 (GKIW…YLVG).

This sequence belongs to the UppP family.

Its subcellular location is the cell inner membrane. It carries out the reaction di-trans,octa-cis-undecaprenyl diphosphate + H2O = di-trans,octa-cis-undecaprenyl phosphate + phosphate + H(+). Its function is as follows. Catalyzes the dephosphorylation of undecaprenyl diphosphate (UPP). Confers resistance to bacitracin. The sequence is that of Undecaprenyl-diphosphatase from Thermotoga sp. (strain RQ2).